The chain runs to 233 residues: Thymidylate kinase (233 aa).

An ATP-binding site is contributed by 10 to 17; it reads GVDGVGKT.

This sequence belongs to the thymidylate kinase family.

The catalysed reaction is dTMP + ATP = dTDP + ADP. Its function is as follows. Phosphorylation of dTMP to form dTDP in both de novo and salvage pathways of dTTP synthesis. This chain is Thymidylate kinase, found in Bifidobacterium longum subsp. infantis (strain ATCC 15697 / DSM 20088 / JCM 1222 / NCTC 11817 / S12).